A 428-amino-acid polypeptide reads, in one-letter code: Acylglycerol kinase, mitochondrial (428 aa).

Positions 18-34 (STVGFCLLAYGSHWLYG) are hydrophobic. Residues 61 to 202 (SAIKKATVFL…LDVLQIKGEQ (142 aa)) enclose the DAGKc domain.

It belongs to the AGK family. In terms of assembly, component of the TIM22 complex. Requires Mg(2+) as cofactor.

It localises to the mitochondrion inner membrane. It is found in the mitochondrion intermembrane space. It catalyses the reaction a monoacylglycerol + ATP = a monoacyl-sn-glycero-3-phosphate + ADP + H(+). It carries out the reaction a 1,2-diacyl-sn-glycerol + ATP = a 1,2-diacyl-sn-glycero-3-phosphate + ADP + H(+). The enzyme catalyses an N-acylsphing-4-enine + ATP = an N-acylsphing-4-enine 1-phosphate + ADP + H(+). The catalysed reaction is 1-(9Z-octadecenoyl)-sn-glycerol + ATP = 1-(9Z-octadecenoyl)-sn-glycero-3-phosphate + ADP + H(+). It catalyses the reaction 1,2-di-(9Z-octadecenoyl)-sn-glycerol + ATP = 1,2-di-(9Z-octadecenoyl)-sn-glycero-3-phosphate + ADP + H(+). It carries out the reaction a 1-acyl-sn-glycerol + ATP = a 1-acyl-sn-glycero-3-phosphate + ADP + H(+). The enzyme catalyses 1-hexadecanoyl-sn-glycerol + ATP = 1-hexadecanoyl-sn-glycero-3-phosphate + ADP + H(+). The catalysed reaction is a 2-acylglycerol + ATP = a 2-acyl-sn-glycerol 3-phosphate + ADP + H(+). It catalyses the reaction 2-(5Z,8Z,11Z,14Z-eicosatetraenoyl)-glycerol + ATP = 2-(5Z,8Z,11Z,14Z-eicosatetraenoyl)-sn-glycero-3-phosphate + ADP + H(+). It carries out the reaction 1-(5Z,8Z,11Z,14Z-eicosatetraenoyl)-sn-glycerol + ATP = 1-(5Z,8Z,11Z,14Z-eicosatetraenoyl)-sn-glycero-3-phosphate + ADP + H(+). The enzyme catalyses N-(hexanoyl)sphing-4-enine + ATP = N-hexanoylsphing-4-enine 1-phosphate + ADP + H(+). It participates in lipid metabolism; glycerolipid metabolism. Lipid kinase that can phosphorylate both monoacylglycerol and diacylglycerol to form lysophosphatidic acid (LPA) and phosphatidic acid (PA), respectively. Phosphorylates ceramide but not sphingosine. Phosphorylates 1,2-dioleoylglycerol more rapidly than 2,3-dioleoylglycerol. Independently of its lipid kinase activity, acts as a component of the TIM22 complex. The TIM22 complex mediates the import and insertion of multi-pass transmembrane proteins into the mitochondrial inner membrane by forming a twin-pore translocase that uses the membrane potential as the external driving force. This chain is Acylglycerol kinase, mitochondrial, found in Xenopus laevis (African clawed frog).